Reading from the N-terminus, the 356-residue chain is tRNA N6-adenosine threonylcarbamoyltransferase (356 aa).

Fe cation-binding residues include His-115 and His-119. Residues 138–142 (LVSGG), Asp-171, Gly-184, and Asn-283 each bind substrate. Asp-311 is a Fe cation binding site.

The protein belongs to the KAE1 / TsaD family. It depends on Fe(2+) as a cofactor.

It is found in the cytoplasm. It catalyses the reaction L-threonylcarbamoyladenylate + adenosine(37) in tRNA = N(6)-L-threonylcarbamoyladenosine(37) in tRNA + AMP + H(+). Required for the formation of a threonylcarbamoyl group on adenosine at position 37 (t(6)A37) in tRNAs that read codons beginning with adenine. Is involved in the transfer of the threonylcarbamoyl moiety of threonylcarbamoyl-AMP (TC-AMP) to the N6 group of A37, together with TsaE and TsaB. TsaD likely plays a direct catalytic role in this reaction. This is tRNA N6-adenosine threonylcarbamoyltransferase from Prochlorococcus marinus (strain MIT 9301).